The chain runs to 326 residues: uncharacterized protein (326 aa).

The protein belongs to the transferase hexapeptide repeat family.

This is an uncharacterized protein from Escherichia coli (strain K12).